The chain runs to 274 residues: Protein A11 homolog (274 aa).

Residues aspartate 106–asparagine 136 adopt a coiled-coil conformation.

The protein belongs to the poxviridae A11 family. As to quaternary structure, homomultimer. Interacts with A32. Phosphorylated by a F10-independent mechanism.

The protein resides in the host cytoplasm. Its function is as follows. Required for viral crescent formation early during virus morphogenesis. This is Protein A11 homolog from Fowlpox virus (strain NVSL) (FPV).